Consider the following 990-residue polypeptide: Glycine dehydrogenase (decarboxylating) (990 aa).

Position 726 is an N6-(pyridoxal phosphate)lysine (K726).

This sequence belongs to the GcvP family. In terms of assembly, the glycine cleavage system is composed of four proteins: P, T, L and H. Requires pyridoxal 5'-phosphate as cofactor.

The catalysed reaction is N(6)-[(R)-lipoyl]-L-lysyl-[glycine-cleavage complex H protein] + glycine + H(+) = N(6)-[(R)-S(8)-aminomethyldihydrolipoyl]-L-lysyl-[glycine-cleavage complex H protein] + CO2. In terms of biological role, the glycine cleavage system catalyzes the degradation of glycine. The P protein binds the alpha-amino group of glycine through its pyridoxal phosphate cofactor; CO(2) is released and the remaining methylamine moiety is then transferred to the lipoamide cofactor of the H protein. This is Glycine dehydrogenase (decarboxylating) from Rhodopseudomonas palustris (strain ATCC BAA-98 / CGA009).